The sequence spans 189 residues: Inosine triphosphate pyrophosphatase (189 aa).

An ITP-binding site is contributed by 14–19 (TGNQNK). Residue E42 participates in Mg(2+) binding. ITP contacts are provided by residues K54, 70 to 71 (DT), K87, 146 to 149 (FGWD), K167, and 172 to 173 (HR).

Belongs to the HAM1 NTPase family. As to quaternary structure, homodimer. The cofactor is Mg(2+). Mn(2+) is required as a cofactor.

The protein resides in the cytoplasm. It localises to the nucleus. The catalysed reaction is ITP + H2O = IMP + diphosphate + H(+). It catalyses the reaction dITP + H2O = dIMP + diphosphate + H(+). The enzyme catalyses XTP + H2O = XMP + diphosphate + H(+). Its function is as follows. Pyrophosphatase that hydrolyzes non-canonical purine nucleotides such as inosine triphosphate (ITP), deoxyinosine triphosphate (dITP) or xanthosine 5'-triphosphate (XTP) to their respective monophosphate derivatives. The enzyme does not distinguish between the deoxy- and ribose forms. Probably excludes non-canonical purines from RNA and DNA precursor pools, thus preventing their incorporation into RNA and DNA and avoiding chromosomal lesions. This Pyricularia oryzae (strain 70-15 / ATCC MYA-4617 / FGSC 8958) (Rice blast fungus) protein is Inosine triphosphate pyrophosphatase.